The chain runs to 289 residues: Acetyl-coenzyme A carboxylase carboxyl transferase subunit beta (289 aa).

The CoA carboxyltransferase N-terminal domain maps to 34–289 (MWVKCNKCGE…KLINMHQNSF (256 aa)). Zn(2+)-binding residues include Cys38, Cys41, Cys57, and Cys60. The segment at 38 to 60 (CNKCGEILYQNDLEKNYMVCNLC) adopts a C4-type zinc-finger fold.

It belongs to the AccD/PCCB family. Acetyl-CoA carboxylase is a heterohexamer composed of biotin carboxyl carrier protein (AccB), biotin carboxylase (AccC) and two subunits each of ACCase subunit alpha (AccA) and ACCase subunit beta (AccD). The cofactor is Zn(2+).

Its subcellular location is the cytoplasm. The catalysed reaction is N(6)-carboxybiotinyl-L-lysyl-[protein] + acetyl-CoA = N(6)-biotinyl-L-lysyl-[protein] + malonyl-CoA. It functions in the pathway lipid metabolism; malonyl-CoA biosynthesis; malonyl-CoA from acetyl-CoA: step 1/1. In terms of biological role, component of the acetyl coenzyme A carboxylase (ACC) complex. Biotin carboxylase (BC) catalyzes the carboxylation of biotin on its carrier protein (BCCP) and then the CO(2) group is transferred by the transcarboxylase to acetyl-CoA to form malonyl-CoA. The chain is Acetyl-coenzyme A carboxylase carboxyl transferase subunit beta from Clostridium botulinum (strain ATCC 19397 / Type A).